The following is a 634-amino-acid chain: tRNA uridine 5-carboxymethylaminomethyl modification enzyme MnmG (634 aa).

14-19 (GGGHAG) contributes to the FAD binding site. 279-293 (GPRYCPSIEDKVVRF) is an NAD(+) binding site.

It belongs to the MnmG family. In terms of assembly, homodimer. Heterotetramer of two MnmE and two MnmG subunits. FAD is required as a cofactor.

The protein resides in the cytoplasm. Functionally, NAD-binding protein involved in the addition of a carboxymethylaminomethyl (cmnm) group at the wobble position (U34) of certain tRNAs, forming tRNA-cmnm(5)s(2)U34. The protein is tRNA uridine 5-carboxymethylaminomethyl modification enzyme MnmG of Xanthomonas campestris pv. campestris (strain B100).